Reading from the N-terminus, the 204-residue chain is Holliday junction branch migration complex subunit RuvA (204 aa).

Residues 1-64 (MIGRLQGILL…EDAHLLFGFS (64 aa)) are domain I. Positions 65-143 (AKTDRTLFRE…GIKQPDFFVE (79 aa)) are domain II. Positions 144-155 (SSHVGAVDPVTT) are flexible linker. The tract at residues 156-204 (SPEVPAEEAVAALMALGYKASDAEKMVKRIAKPHLTSEQLIREALKAAL) is domain III.

This sequence belongs to the RuvA family. In terms of assembly, homotetramer. Forms an RuvA(8)-RuvB(12)-Holliday junction (HJ) complex. HJ DNA is sandwiched between 2 RuvA tetramers; dsDNA enters through RuvA and exits via RuvB. An RuvB hexamer assembles on each DNA strand where it exits the tetramer. Each RuvB hexamer is contacted by two RuvA subunits (via domain III) on 2 adjacent RuvB subunits; this complex drives branch migration. In the full resolvosome a probable DNA-RuvA(4)-RuvB(12)-RuvC(2) complex forms which resolves the HJ.

Its subcellular location is the cytoplasm. Its function is as follows. The RuvA-RuvB-RuvC complex processes Holliday junction (HJ) DNA during genetic recombination and DNA repair, while the RuvA-RuvB complex plays an important role in the rescue of blocked DNA replication forks via replication fork reversal (RFR). RuvA specifically binds to HJ cruciform DNA, conferring on it an open structure. The RuvB hexamer acts as an ATP-dependent pump, pulling dsDNA into and through the RuvAB complex. HJ branch migration allows RuvC to scan DNA until it finds its consensus sequence, where it cleaves and resolves the cruciform DNA. In Mannheimia succiniciproducens (strain KCTC 0769BP / MBEL55E), this protein is Holliday junction branch migration complex subunit RuvA.